The chain runs to 71 residues: Large ribosomal subunit protein bL31 (71 aa).

Positions 16, 18, 36, and 39 each coordinate Zn(2+).

It belongs to the bacterial ribosomal protein bL31 family. Type A subfamily. As to quaternary structure, part of the 50S ribosomal subunit. Requires Zn(2+) as cofactor.

Its function is as follows. Binds the 23S rRNA. This Syntrophus aciditrophicus (strain SB) protein is Large ribosomal subunit protein bL31.